We begin with the raw amino-acid sequence, 229 residues long: uncharacterized protein (229 aa).

7 helical membrane-spanning segments follow: residues 21 to 41 (IYSL…LMLY), 56 to 76 (MIYY…SSAA), 83 to 103 (ALPI…FIIV), 109 to 129 (TVFQ…IIGV), 141 to 161 (AMFA…FIGS), 162 to 182 (GMMS…LIAS), and 202 to 222 (WAVA…ISLL).

It belongs to the BI1 family.

The protein resides in the cell membrane. This is an uncharacterized protein from Streptococcus pyogenes serotype M1.